The sequence spans 476 residues: Zinc transporter SLC39A7 (476 aa).

A helical membrane pass occupies residues 7–27; it reads APHWVAVGLLTWAALGLLVAG. Positions 35–109 are enriched in basic and acidic residues; it reads HKDVEEDFHG…SHGHSHDSLH (75 aa). The disordered stretch occupies residues 35 to 131; that stretch reads HKDVEEDFHG…HGTSREAGAP (97 aa). H73 carries the pros-methylhistidine modification. Over residues 110–120 the composition is skewed to basic residues; the sequence is HGGHGHAHREH. Helical transmembrane passes span 146–166, 177–197, and 222–242; these read ALGATVLISAAPFFVLFLIPV, LQILLSFASGGLLGDAFLHLI, and GPILSVGLWVLSGIVAFLVVE. Positions 249–320 are disordered; sequence KGGHGHSHGH…QSPEEEKAGS (72 aa). A compositionally biased stretch (basic and acidic residues) spans 257–292; that stretch reads GHGDRHAHGDSHTHGDRHECSSKEKPSTEEEKEVGG. S283 bears the Phosphoserine mark. Transmembrane regions (helical) follow at residues 393 to 413 and 417 to 437; these read VTAIGALAGTACALLTEGGAV and VAGGAGPGWVLPFTAGGFIYV.

It belongs to the ZIP transporter (TC 2.A.5) family. KE4/Catsup subfamily. Homodimer. Methylation at some His residue by METTL9 leads to reduced zinc-binding. Post-translationally, rapidly phosphorylated by CK2 following Zn(2+) treatment. This phosphorylation is required for efficient cytosolic Zn(2+) release. As to expression, widely expressed. Highly expressed in the intestinal crypts.

It is found in the endoplasmic reticulum membrane. Its subcellular location is the golgi apparatus. It localises to the cis-Golgi network membrane. It catalyses the reaction Zn(2+)(in) = Zn(2+)(out). In terms of biological role, transports Zn(2+) from the endoplasmic reticulum (ER)/Golgi apparatus to the cytosol, playing an essential role in the regulation of cytosolic zinc levels. Acts as a gatekeeper of zinc release from intracellular stores, requiring post-translational activation by phosphorylation, resulting in activation of multiple downstream pathways leading to cell growth and proliferation. Has an essential role in B cell development and is required for proper B cell receptor signaling. Plays an important role in maintaining intestinal epithelial homeostasis and skin dermis development by regulating ER function. Controls cell signaling pathways involved in glucose metabolism in skeletal muscle. Has a protective role against ER stress in different biological contexts. Mediates Zn(2+)-induced ferroptosis. In Mus musculus (Mouse), this protein is Zinc transporter SLC39A7 (Slc39a7).